Here is a 319-residue protein sequence, read N- to C-terminus: Ribosomal RNA small subunit methyltransferase H (319 aa).

S-adenosyl-L-methionine-binding positions include 38 to 40, D58, F82, D104, and Q111; that span reads GGH.

This sequence belongs to the methyltransferase superfamily. RsmH family.

It is found in the cytoplasm. It carries out the reaction cytidine(1402) in 16S rRNA + S-adenosyl-L-methionine = N(4)-methylcytidine(1402) in 16S rRNA + S-adenosyl-L-homocysteine + H(+). In terms of biological role, specifically methylates the N4 position of cytidine in position 1402 (C1402) of 16S rRNA. This chain is Ribosomal RNA small subunit methyltransferase H, found in Histophilus somni (strain 129Pt) (Haemophilus somnus).